The following is a 530-amino-acid chain: Autoinducer-2 kinase (530 aa).

Belongs to the FGGY kinase family.

It localises to the cytoplasm. The enzyme catalyses (S)-4,5-dihydroxypentane-2,3-dione + ATP = (2S)-2-hydroxy-3,4-dioxopentyl phosphate + ADP + H(+). Its function is as follows. Catalyzes the phosphorylation of autoinducer-2 (AI-2) to phospho-AI-2, which subsequently inactivates the transcriptional regulator LsrR and leads to the transcription of the lsr operon. Phosphorylates the ring-open form of (S)-4,5-dihydroxypentane-2,3-dione (DPD), which is the precursor to all AI-2 signaling molecules, at the C5 position. The sequence is that of Autoinducer-2 kinase from Escherichia coli (strain SMS-3-5 / SECEC).